Here is a 162-residue protein sequence, read N- to C-terminus: Onchocystatin (162 aa).

An N-terminal signal peptide occupies residues 1–32 (MLTIKDGTLLIHLLLFSVVALVQLQGAKSARA). The disordered stretch occupies residues 30–54 (ARAKNPSKMESKTGENQDRPVLLGG). Over residues 36–47 (SKMESKTGENQD) the composition is skewed to basic and acidic residues. The Secondary area of contact motif lies at 97 to 101 (QVVAG). Cysteine 115 and cysteine 128 form a disulfide bridge.

This sequence belongs to the cystatin family. As to expression, expressed in the cuticle of L3 and L4 larvae, female adult, and in the eggshell of developing microfilariae.

Cysteine protease inhibitor which inhibits members of the peptidase C1 family. In the human host, inhibits CTSL/cathepsin L and CTSS/cathepsin S and to a lesser extent CTSB/cathepsin B which may cause defects in antigen processing and thereby impair antigen-driven T cell proliferation. In Onchocerca volvulus, this protein is Onchocystatin.